The sequence spans 510 residues: Insulinoma-associated protein 1 (510 aa).

Positions 1–12 are enriched in basic residues; the sequence is MPRGFLVKRSKK. Residues 1-20 form an SNAG domain region; that stretch reads MPRGFLVKRSKKSTPVSYRV. 2 disordered regions span residues 1 to 110 and 176 to 226; these read MPRG…SREH and GAEA…PKAI. The tract at residues 2-7 is required and sufficient for interaction with KDM1A; it reads PRGFLV. The necessary for interaction with CCND1 stretch occupies residues 43-58; the sequence is PPAPSPVPGPLPPPPP. A compositionally biased stretch (pro residues) spans 43 to 59; that stretch reads PPAPSPVPGPLPPPPPA. 2 stretches are compositionally biased toward low complexity: residues 64 to 74 and 209 to 218; these read AALAAALACAP and EPPAKAVKAP. The segment at 267-287 adopts a C2H2-type 1; atypical zinc-finger fold; sequence FICQLCKEEYADPFALAQHKC. The C2H2-type 2 zinc-finger motif lies at 295–317; the sequence is YRCPECAKVFSCPANLASHRRWH. Positions 315 to 362 are disordered; sequence RWHKPRPAPAAARAPEPEAAARAEAREAPGGGSDRDTPSPGGVSESGS. The span at 329–351 shows a compositional bias: basic and acidic residues; that stretch reads PEPEAAARAEAREAPGGGSDRDT. 3 C2H2-type zinc fingers span residues 367-389, 441-464, and 469-492; these read YECH…LLAH, HLCP…RLLH, and FPCK…NKCH.

Belongs to the INSM1 family. As to quaternary structure, interacts (via the SNAG domain) with HDAC1. Interacts (via the SNAG domain) with HDAC2. Interacts (via the SNAG domain) with KDM1A. Interacts (via the SNAG domain) with RCOR1. Interacts with SORBS1. Interacts (via the N-terminal region) with CCND1 (via cyclin N-terminal domain); the interaction competes with the binding of CCND1 to CDK4 during cell cycle progression and increases its transcriptional repressor activity. Interacts with HDAC3; the interaction increases its transcriptional repressor activity. Expressed in pancreatic duct cells. Expressed in several tumor cell lines of neuroendocrine origin including pheochromocytoma, medullary thyroid carcinoma, insulinoma, medulloblastoma, retinoblastoma, pheochromacytoma, medullary thyroid carcinoma and small cell lung carcinoma.

Its subcellular location is the nucleus. In terms of biological role, sequence-specific DNA-binding transcriptional regulator that plays a key role in neurogenesis and neuroendocrine cell differentiation during embryonic and/or fetal development. Binds to the consensus sequence 5'-[TG][TC][TC][TT][GA]GGG[CG]A-3' in target promoters. Acts as a transcriptional repressor of NEUROD1 and INS expression via its interaction with cyclin CCND1 in a cell cycle-independent manner. Negatively regulates skeletal muscle-specific gene expression in endocrine cells of the pituitary by inhibiting the Notch signaling pathway. Represses target gene transcription by recruiting chromatin-modifying factors, such as HDAC1, HDAC2, HDAC3, KDM1A and RCOR1 histone deacetylases. Binds to its own promoter, suggesting autoregulation as a self-control feedback mechanism. Competes with histone H3 for the same binding site on the histone demethylase complex formed by KDM1A and RCOR1, and thereby inhibits demethylation of histone H3 at 'Lys-4'. Promotes the generation and expansion of neuronal basal progenitor cells in the developing neocortex. Involved in the differentiation of endocrine cells of the developing anterior pituitary gland, of the pancreas and intestine, and of sympatho-adrenal cells in the peripheral nervous system. Promotes cell cycle signaling arrest and inhibition of cellular proliferation. This chain is Insulinoma-associated protein 1 (INSM1), found in Homo sapiens (Human).